Reading from the N-terminus, the 271-residue chain is Structure-specific endonuclease subunit SLX1 (271 aa).

The region spanning 9–94 is the GIY-YIG domain; it reads RFFGVYLLYC…PQASRRLTHV (86 aa). An SLX1-type zinc finger spans residues 182-234; the sequence is CTLCARMLQDEEGPLCCPHPGCPLRAHIICLAEEFLQEEPGQLLPLEGHCPSC.

Belongs to the SLX1 family. Forms a heterodimer with SLX4. A divalent metal cation serves as cofactor.

The protein localises to the nucleus. In terms of biological role, catalytic subunit of the SLX1-SLX4 structure-specific endonuclease that resolves DNA secondary structures generated during DNA repair and recombination. Has endonuclease activity towards branched DNA substrates, introducing single-strand cuts in duplex DNA close to junctions with ss-DNA. Has a preference for 5'-flap structures, and promotes symmetrical cleavage of static and migrating Holliday junctions (HJs). Resolves HJs by generating two pairs of ligatable, nicked duplex products. This chain is Structure-specific endonuclease subunit SLX1 (Slx1b), found in Rattus norvegicus (Rat).